The sequence spans 108 residues: Kanamycin resistance protein (108 aa).

Residues 1-99 (SRTLLLERGR…PAVYMVQTRQ (99 aa)) form the N-acetyltransferase domain.

The chain is Kanamycin resistance protein from Rhizobium radiobacter (Agrobacterium tumefaciens).